Consider the following 326-residue polypeptide: Nicotianamine synthase 2 (326 aa).

Belongs to the nicotianamine synthase (NAS)-like family. In terms of tissue distribution, expressed in roots.

It carries out the reaction 3 S-adenosyl-L-methionine = nicotianamine + 3 S-methyl-5'-thioadenosine + 3 H(+). In terms of biological role, synthesizes nicotianamine, a polyamine that is the first intermediate in the synthesis of the phytosiderophores of the mugineic acid type found in gramineae which serve as a sensor for the physiological iron status within the plant, and/or might be involved in the transport of iron. The sequence is that of Nicotianamine synthase 2 (NAS2) from Oryza sativa subsp. japonica (Rice).